The primary structure comprises 42 residues: Large ribosomal subunit protein bL36 (42 aa).

Belongs to the bacterial ribosomal protein bL36 family.

The chain is Large ribosomal subunit protein bL36 from Wolbachia pipientis wMel.